The primary structure comprises 238 residues: Nucleoside diphosphate kinase III, chloroplastic/mitochondrial (238 aa).

The N-terminal 85 residues, 1 to 85, are a transit peptide targeting the chloroplast and mitochondrion; it reads MSSQICRSAS…YMIQDQEVLA (85 aa). 6 residues coordinate ATP: lysine 96, phenylalanine 144, arginine 172, threonine 178, arginine 189, and asparagine 199. Catalysis depends on histidine 202, which acts as the Pros-phosphohistidine intermediate.

It belongs to the NDK family. In terms of assembly, homohexamer. Mg(2+) is required as a cofactor.

It is found in the plastid. The protein resides in the chloroplast thylakoid lumen. The protein localises to the mitochondrion intermembrane space. It catalyses the reaction a 2'-deoxyribonucleoside 5'-diphosphate + ATP = a 2'-deoxyribonucleoside 5'-triphosphate + ADP. The catalysed reaction is a ribonucleoside 5'-diphosphate + ATP = a ribonucleoside 5'-triphosphate + ADP. Functionally, major role in the synthesis of nucleoside triphosphates other than ATP. The ATP gamma phosphate is transferred to the NDP beta phosphate via a ping-pong mechanism, using a phosphorylated active-site intermediate. Shows the highest specificity towards GDP. This Arabidopsis thaliana (Mouse-ear cress) protein is Nucleoside diphosphate kinase III, chloroplastic/mitochondrial (NDPK3).